Here is a 208-residue protein sequence, read N- to C-terminus: Thymidylate kinase (208 aa).

An ATP-binding site is contributed by 11–18; the sequence is GGEGVGKS.

The protein belongs to the thymidylate kinase family.

The enzyme catalyses dTMP + ATP = dTDP + ADP. Phosphorylation of dTMP to form dTDP in both de novo and salvage pathways of dTTP synthesis. This is Thymidylate kinase from Methylococcus capsulatus (strain ATCC 33009 / NCIMB 11132 / Bath).